Here is a 239-residue protein sequence, read N- to C-terminus: Probable methylthioribulose-1-phosphate dehydratase (239 aa).

Cysteine 100 serves as a coordination point for substrate. 2 residues coordinate Zn(2+): histidine 118 and histidine 120. The active-site Proton donor/acceptor is the glutamate 141. A Zn(2+)-binding site is contributed by histidine 197.

It belongs to the aldolase class II family. MtnB subfamily. It depends on Zn(2+) as a cofactor.

It is found in the cytoplasm. It catalyses the reaction 5-(methylsulfanyl)-D-ribulose 1-phosphate = 5-methylsulfanyl-2,3-dioxopentyl phosphate + H2O. It participates in amino-acid biosynthesis; L-methionine biosynthesis via salvage pathway; L-methionine from S-methyl-5-thio-alpha-D-ribose 1-phosphate: step 2/6. Functionally, catalyzes the dehydration of methylthioribulose-1-phosphate (MTRu-1-P) into 2,3-diketo-5-methylthiopentyl-1-phosphate (DK-MTP-1-P). The sequence is that of Probable methylthioribulose-1-phosphate dehydratase from Leishmania major.